Here is a 64-residue protein sequence, read N- to C-terminus: Small ribosomal subunit protein eS17 (64 aa).

This sequence belongs to the eukaryotic ribosomal protein eS17 family.

This chain is Small ribosomal subunit protein eS17, found in Methanocorpusculum labreanum (strain ATCC 43576 / DSM 4855 / Z).